A 603-amino-acid chain; its full sequence is Probable NOT transcription complex subunit VIP2 (603 aa).

2 stretches are compositionally biased toward polar residues: residues 1–28 and 36–70; these read MQGTLTSRNTAINNVPSSGVQQSGNNLS and NLPSALSQIPQGNSHGHSGMTSRGGTSVVGNPGYS. 4 disordered regions span residues 1–70, 212–242, 306–335, and 355–377; these read MQGT…PGYS, NDGSPFDINDFPQLSSRPSSAGGPQGQLGSL, AGFNLGGTYSSNRPQQQLQHAPSVSSGGVS, and SSHSSYQQQGGGPPGIGLRPLNS. The span at 312-335 shows a compositional bias: polar residues; it reads GTYSSNRPQQQLQHAPSVSSGGVS.

The protein belongs to the CNOT2/3/5 family. Binds to VIP1. Interacts with Agrobacterium tumefaciens VirE2. Forms a complex made of Agrobacterium VirE2, VIP1, VIP2 and single-stranded DNA (ssDNA).

It localises to the nucleus. In terms of biological role, transcriptional regulator required for Agrobacterium-mediated stable genetic transformation by T-DNA integration in host genome, but not for T-DNA transient expression. The protein is Probable NOT transcription complex subunit VIP2 (VIP2) of Nicotiana benthamiana.